The sequence spans 354 residues: Photosystem II D2 protein (354 aa).

An N-acetylthreonine modification is found at threonine 2. Position 2 is a phosphothreonine (threonine 2). Residues cysteine 42 to threonine 62 form a helical membrane-spanning segment. Histidine 119 contacts chlorophyll a. A helical transmembrane segment spans residues glycine 126–proline 142. Residues glutamine 131 and asparagine 144 each coordinate pheophytin a. A helical membrane pass occupies residues valine 154–glutamine 167. Histidine 199 provides a ligand contact to chlorophyll a. Residues alanine 209 to aspartate 229 traverse the membrane as a helical segment. A plastoquinone is bound by residues histidine 216 and phenylalanine 263. Histidine 216 contributes to the Fe cation binding site. Histidine 270 is a Fe cation binding site. A helical membrane pass occupies residues glycine 280–arginine 296.

The protein belongs to the reaction center PufL/M/PsbA/D family. In terms of assembly, PSII is composed of 1 copy each of membrane proteins PsbA, PsbB, PsbC, PsbD, PsbE, PsbF, PsbH, PsbI, PsbJ, PsbK, PsbL, PsbM, PsbT, PsbX, PsbY, PsbZ, Psb30/Ycf12, at least 3 peripheral proteins of the oxygen-evolving complex and a large number of cofactors. It forms dimeric complexes. The D1/D2 heterodimer binds P680, chlorophylls that are the primary electron donor of PSII, and subsequent electron acceptors. It shares a non-heme iron and each subunit binds pheophytin, quinone, additional chlorophylls, carotenoids and lipids. There is also a Cl(-1) ion associated with D1 and D2, which is required for oxygen evolution. The PSII complex binds additional chlorophylls, carotenoids and specific lipids. is required as a cofactor.

It localises to the plastid. The protein resides in the chloroplast thylakoid membrane. The enzyme catalyses 2 a plastoquinone + 4 hnu + 2 H2O = 2 a plastoquinol + O2. Its function is as follows. Photosystem II (PSII) is a light-driven water:plastoquinone oxidoreductase that uses light energy to abstract electrons from H(2)O, generating O(2) and a proton gradient subsequently used for ATP formation. It consists of a core antenna complex that captures photons, and an electron transfer chain that converts photonic excitation into a charge separation. The D1/D2 (PsbA/PsbD) reaction center heterodimer binds P680, the primary electron donor of PSII as well as several subsequent electron acceptors. D2 is needed for assembly of a stable PSII complex. The sequence is that of Photosystem II D2 protein from Mesostigma viride (Green alga).